The chain runs to 132 residues: uncharacterized protein (132 aa).

The disordered stretch occupies residues 39–93; the sequence is HPAGASEALGALPPPRQLVEKRRVSPPRRLDQSGRDGGAVAKCSLSRGLSPPGWT. The span at 56-72 shows a compositional bias: basic and acidic residues; sequence LVEKRRVSPPRRLDQSG.

This is an uncharacterized protein from Homo sapiens (Human).